Reading from the N-terminus, the 88-residue chain is Phosphocarrier protein HPr (88 aa).

The HPr domain maps to 1-88 (MKTQQFTVID…TLLTEMGLAQ (88 aa)). H15 acts as the Pros-phosphohistidine intermediate in catalysis. At S46 the chain carries Phosphoserine; by HPrK/P.

Belongs to the HPr family.

It localises to the cytoplasm. Phosphorylation on Ser-46 inhibits the phosphoryl transfer from enzyme I to HPr. General (non sugar-specific) component of the phosphoenolpyruvate-dependent sugar phosphotransferase system (sugar PTS). This major carbohydrate active-transport system catalyzes the phosphorylation of incoming sugar substrates concomitantly with their translocation across the cell membrane. The phosphoryl group from phosphoenolpyruvate (PEP) is transferred to the phosphoryl carrier protein HPr by enzyme I. Phospho-HPr then transfers it to the PTS EIIA domain. Functionally, P-Ser-HPr interacts with the catabolite control protein A (CcpA), forming a complex that binds to DNA at the catabolite response elements cre, operator sites preceding a large number of catabolite-regulated genes. Thus, P-Ser-HPr is a corepressor in carbon catabolite repression (CCR), a mechanism that allows bacteria to coordinate and optimize the utilization of available carbon sources. P-Ser-HPr also plays a role in inducer exclusion, in which it probably interacts with several non-PTS permeases and inhibits their transport activity. The sequence is that of Phosphocarrier protein HPr (ptsH) from Lysinibacillus sphaericus (Bacillus sphaericus).